A 236-amino-acid polypeptide reads, in one-letter code: Purine nucleoside phosphorylase DeoD-type (236 aa).

His-5 provides a ligand contact to a purine D-ribonucleoside. Residues Gly-21, Arg-25, Arg-44, and 88–91 (RIGS) each bind phosphate. Residues 180–182 (EME) and 204–205 (SD) contribute to the a purine D-ribonucleoside site. Asp-205 acts as the Proton donor in catalysis.

It belongs to the PNP/UDP phosphorylase family. In terms of assembly, homohexamer; trimer of homodimers.

The enzyme catalyses a purine D-ribonucleoside + phosphate = a purine nucleobase + alpha-D-ribose 1-phosphate. It carries out the reaction a purine 2'-deoxy-D-ribonucleoside + phosphate = a purine nucleobase + 2-deoxy-alpha-D-ribose 1-phosphate. Its function is as follows. Catalyzes the reversible phosphorolytic breakdown of the N-glycosidic bond in the beta-(deoxy)ribonucleoside molecules, with the formation of the corresponding free purine bases and pentose-1-phosphate. This chain is Purine nucleoside phosphorylase DeoD-type, found in Tolumonas auensis (strain DSM 9187 / NBRC 110442 / TA 4).